We begin with the raw amino-acid sequence, 300 residues long: MSTVGFDAPARLGTVLTAMVTPFAADGSLDTAAAARLANHLVDSGCDGLVVSGTTGESPTTTDDEKRELLRVVLEAVGDRARVIAGAGTYDTAHSVRLAKACAAEGAHGLLVVTPYYSKPPQRGLIAHFTAVADATELPVLLYDIPGRSVVPIESSTIRALASHPNIVGVKDAKADLHAGGQIIAETGLAYYSGDDALNLPWLAMGATGFISVISHVAANQLRELLSAFTSGDIATARKINATVTPLCDAMARLGGVTMSKAGLRLQGIDVGDPRLPQVPATPEQIEALTADMRAASVLR.

Thr-55 is a binding site for pyruvate. The Proton donor/acceptor role is filled by Tyr-143. The active-site Schiff-base intermediate with substrate is the Lys-171. Position 211 (Ile-211) interacts with pyruvate.

It belongs to the DapA family. In terms of assembly, homotetramer; dimer of dimers.

It is found in the cytoplasm. It carries out the reaction L-aspartate 4-semialdehyde + pyruvate = (2S,4S)-4-hydroxy-2,3,4,5-tetrahydrodipicolinate + H2O + H(+). It functions in the pathway amino-acid biosynthesis; L-lysine biosynthesis via DAP pathway; (S)-tetrahydrodipicolinate from L-aspartate: step 3/4. Functionally, catalyzes the condensation of (S)-aspartate-beta-semialdehyde [(S)-ASA] and pyruvate to 4-hydroxy-tetrahydrodipicolinate (HTPA). The chain is 4-hydroxy-tetrahydrodipicolinate synthase from Mycolicibacterium paratuberculosis (strain ATCC BAA-968 / K-10) (Mycobacterium paratuberculosis).